The following is a 122-amino-acid chain: Phospholipase A2 crotoxin basic subunit CBb (122 aa).

Disulfide bonds link C26–C115, C28–C44, C43–C95, C49–C122, C50–C88, C57–C81, and C75–C86. Residues Y27, G29, and G31 each contribute to the Ca(2+) site. The active site involves H47. Residue D48 coordinates Ca(2+). D89 is an active-site residue.

This sequence belongs to the phospholipase A2 family. Group II subfamily. D49 sub-subfamily. Heterodimer of one of the acidic (CA1, CA2, CA3 or CA4) and one of the basic (CBa1, CBa2, CBb, CBc or CBd) subunits; non-covalently linked. The acidic subunit is non-toxic, without enzymatic activity and comprises 3 peptides that are cross-linked by 5 disulfide bridges. The basic subunit is toxic, has phospholipase A2 activity and is composed of a single chain. Multiple variants of each subunit give different crotoxin complexes that can be subdivided into 2 classes: (1) those of high toxicity, low PLA2 activity (CBb, CBc and CBd linked with high affinity to any CA) and high stability (K(d)=4.5 nM) and (2) those of moderate toxicity, high PLA2 activity (CBa2 linked with low affinity to any CA) and low stability (K(d)=25 nM). It depends on Ca(2+) as a cofactor. In terms of tissue distribution, expressed by the venom gland.

It is found in the secreted. It carries out the reaction a 1,2-diacyl-sn-glycero-3-phosphocholine + H2O = a 1-acyl-sn-glycero-3-phosphocholine + a fatty acid + H(+). Its function is as follows. Heterodimer CA-CB: Crotoxin is a potent presynaptic neurotoxin that possesses phospholipase A2 (PLA2) activity and exerts a lethal action by blocking neuromuscular transmission. It consists of a non-covalent association of a basic and weakly toxic PLA2 subunit (CBa2, CBb, CBc, or CBd), with a small acidic, non-enzymatic and non-toxic subunit (CA1, CA2, CA3 or CA4). The complex acts by binding to a specific 48-kDa protein (R48) receptor located on presynaptic membranes, forming a transient ternary complex CA-CB-R48, followed by dissociation of the CA-CB complex and release of the CA subunit. At equilibrium, only the CB subunits remain associated with the specific crotoxin receptor. In addition to neurotoxicity, crotoxin has been found to exert myotoxicity, nephrotoxicity, and cardiovascular toxicity. Moreover, anti-inflammatory, immunomodulatory, anti-tumor and analgesic effects of crotoxin have also been reported. Functionally, monomer CBb: The basic subunit of crotoxin is a snake venom phospholipase A2 (PLA2) that exhibits weak neurotoxicity (10-fold less than the heterodimer) and strong anticoagulant effects by binding to factor Xa (F10) and inhibiting the prothrombinase activity. In addition, it shows the same effects described for the heterodimer and binds the nucleotide-binding domain (NBD1) of CFTR chloride channels and increases the channel current. PLA2 catalyzes the calcium-dependent hydrolysis of the 2-acyl groups in 3-sn-phosphoglycerides. The polypeptide is Phospholipase A2 crotoxin basic subunit CBb (Crotalus durissus terrificus (South American rattlesnake)).